Here is a 546-residue protein sequence, read N- to C-terminus: Hexose oxidase (546 aa).

One can recognise an FAD-binding PCMH-type domain in the interval 40-222 (IGTNIDFVYV…TKYYFKDLPM (183 aa)). Positions 79-138 (HCYEDFVFDECVKAIINVTGLVESGYDDDRGYFVSSGDTNWGSFKTLFRDHGRVLPGGSC) form a cross-link, 6-(S-cysteinyl)-8alpha-(pros-histidyl)-FAD (His-Cys). Residues N95 and N358 are each glycosylated (N-linked (GlcNAc...) asparagine).

Belongs to the oxygen-dependent FAD-linked oxidoreductase family. In terms of assembly, homodimer. Requires FAD as cofactor. In terms of processing, cleaved into 40 kDa and 29 kDa cleavage products, but the 2 polypeptide chains do not separate and seem to be physically linked together. The FAD cofactor is bound via a bicovalent 6-S-cysteinyl, 8alpha-N1-histidyl FAD linkage.

It carries out the reaction beta-D-glucose + O2 = D-glucono-1,5-lactone + H2O2. The catalysed reaction is D-galactose + O2 = D-galactono-1,5-lactone + H2O2. The enzyme catalyses D-maltose + O2 = D-maltobiono-1,5-lactone + H2O2. It catalyses the reaction D-cellobiose + O2 = D-cellobiono-1,5-lactone + H2O2. It carries out the reaction beta-lactose + O2 = lactobiono-1,5-lactone + H2O2. Its function is as follows. Catalyzes the selective oxidation of C1 hydroxyl moieties on mono- and disaccharides with concomitant reduction of molecular oxygen to hydrogen peroxide. This results in the formation of the corresponding lactones, which typically undergo spontaneous hydrolysis. Hexose oxidase is able to oxidize a variety of substrates including D-glucose, D-galactose, maltose, cellobiose, and lactose. The polypeptide is Hexose oxidase (HOX) (Chondrus crispus (Carrageen Irish moss)).